Consider the following 413-residue polypeptide: MPQQNYLDELTPGFTPLLAIKEASRCLLCHDAPCSQACPAQTDPGKFIRSIYFRNFKGAAETIRENNALGAVCARVCPTEKLCQRGCTRSGIDKPIDIARLQRFITDFEQQTAMQIYQPGSKTRGKVAIIGAGPAGLQASVTLTHLGYDVTIYEKQPQPGGWLRHGIPAFRLPQSVLDQEIARIVEMGVNIKCNCEVGGSLSLAQLKAEYRAVLMTVGMSCGSGLPLFEQASHVEIAVDFLQRARQADGDISVPRSALIIGGGDVAMDVASTLKILGCPSVTCVAREELAEFPASEKEFTSTQALGVSIIDGFTPVAVSGNKVTFHHVRHSGELTLEAENIILAVGQHARLDTFAEIKAQHNIIDTHNYQTDDPAIFAAGDIVKGDKTVVYAVKTGKEAAQAIHHYLEEACSC.

NAD(+) is bound at residue glutamate 287.

Belongs to the NADH dehydrogenase family. Heterotetramer of 2 PreA and 2 PreT subunits.

The enzyme catalyses 5,6-dihydrouracil + NAD(+) = uracil + NADH + H(+). The catalysed reaction is 5,6-dihydrothymine + NAD(+) = thymine + NADH + H(+). In terms of biological role, involved in pyrimidine base degradation. Catalyzes physiologically the reduction of uracil to 5,6-dihydrouracil (DHU) by using NADH as a specific cosubstrate. It also catalyzes the reverse reaction and the reduction of thymine to 5,6-dihydrothymine (DHT). In Salmonella typhimurium (strain LT2 / SGSC1412 / ATCC 700720), this protein is NAD-dependent dihydropyrimidine dehydrogenase subunit PreT (preT).